A 260-amino-acid polypeptide reads, in one-letter code: Phosphate import ATP-binding protein PstB 5 (260 aa).

In terms of domain architecture, ABC transporter spans 9-255 (IKVKDLSFYY…PLDSRTRDYV (247 aa)). 41-48 (GPSGCGKS) lines the ATP pocket.

This sequence belongs to the ABC transporter superfamily. Phosphate importer (TC 3.A.1.7) family. The complex is composed of two ATP-binding proteins (PstB), two transmembrane proteins (PstC and PstA) and a solute-binding protein (PstS).

It localises to the cell inner membrane. It catalyses the reaction phosphate(out) + ATP + H2O = ADP + 2 phosphate(in) + H(+). In terms of biological role, part of the ABC transporter complex PstSACB involved in phosphate import. Responsible for energy coupling to the transport system. The polypeptide is Phosphate import ATP-binding protein PstB 5 (Trichormus variabilis (strain ATCC 29413 / PCC 7937) (Anabaena variabilis)).